Here is a 367-residue protein sequence, read N- to C-terminus: Phosphoribosylaminoimidazole-succinocarboxamide synthase (367 aa).

This sequence belongs to the SAICAR synthetase family.

The catalysed reaction is 5-amino-1-(5-phospho-D-ribosyl)imidazole-4-carboxylate + L-aspartate + ATP = (2S)-2-[5-amino-1-(5-phospho-beta-D-ribosyl)imidazole-4-carboxamido]succinate + ADP + phosphate + 2 H(+). Its pathway is purine metabolism; IMP biosynthesis via de novo pathway; 5-amino-1-(5-phospho-D-ribosyl)imidazole-4-carboxamide from 5-amino-1-(5-phospho-D-ribosyl)imidazole-4-carboxylate: step 1/2. The polypeptide is Phosphoribosylaminoimidazole-succinocarboxamide synthase (Saccharophagus degradans (strain 2-40 / ATCC 43961 / DSM 17024)).